Here is a 1651-residue protein sequence, read N- to C-terminus: Alsin (1651 aa).

3 RCC1 repeats span residues 59 to 108 (DGEV…AVTE), 109 to 167 (SGVV…ALSI), and 169 to 218 (REIW…ALVQ). The disordered stretch occupies residues 444 to 476 (REEQVKQESLQGKKSSSLMDIREEESEGGSRRL). Residues 450–461 (QESLQGKKSSSL) are compositionally biased toward polar residues. S459, S460, S477, and S486 each carry phosphoserine. T504 carries the phosphothreonine modification. 2 RCC1 repeats span residues 519–570 (RTEV…ALTA) and 572–621 (SQVY…FLVD). K527 is subject to N6-acetyllysine. Residues 684-879 (GYIASLHELA…ESLALHLGKK (196 aa)) enclose the DH domain. Residues 895-1001 (GKMTDSLRKP…RAISQAVDQA (107 aa)) form the PH domain. 8 MORN repeats span residues 1043 to 1065 (YDGRWLSGKPHGRGVLKWPDGKV), 1066 to 1088 (YSGTFRNGLEDGYGEYRIPNKAL), 1094 to 1116 (YVGHWKEGKMCGQGVYSYASGEV), 1117 to 1139 (FEGCFQDNMRHGHGLLRSGKLTS), 1145 to 1167 (FIGQWVMDKKAGYGVFDDITRGE), 1169 to 1191 (YMGMWQDDACQGNGVVVTQFGLY), 1192 to 1214 (YEGNFHLNKMMGNGVLLSEDDTI), and 1215 to 1238 (YEGEFSDDWTLCGKGTLTMPNGDY). Phosphoserine is present on S1329. The 145-residue stretch at 1507–1651 (KQPDIALLGF…YYQIQREKLN (145 aa)) folds into the VPS9 domain.

Forms a heteromeric complex with ALS2CL. Interacts with ALS2CL.

In terms of biological role, may act as a GTPase regulator. Controls survival and growth of spinal motoneurons. This is Alsin (Als2) from Rattus norvegicus (Rat).